The chain runs to 287 residues: 4-hydroxybenzoate octaprenyltransferase (287 aa).

The next 9 helical transmembrane spans lie at 21 to 41 (VGIF…AKGA), 44 to 64 (FKIA…GCIV), 91 to 111 (VTEA…LVLL), 112 to 132 (LNRL…VYPF), 139 to 159 (LPQL…FAAT), 160 to 180 (VGHV…WPIV), 211 to 231 (LMIG…GWYL), 235 to 255 (YWFY…QFLI), and 263 to 283 (CFAA…GILL).

The protein belongs to the UbiA prenyltransferase family. It depends on Mg(2+) as a cofactor.

Its subcellular location is the cell inner membrane. The catalysed reaction is all-trans-octaprenyl diphosphate + 4-hydroxybenzoate = 4-hydroxy-3-(all-trans-octaprenyl)benzoate + diphosphate. It functions in the pathway cofactor biosynthesis; ubiquinone biosynthesis. In terms of biological role, catalyzes the prenylation of para-hydroxybenzoate (PHB) with an all-trans polyprenyl group. Mediates the second step in the final reaction sequence of ubiquinone-8 (UQ-8) biosynthesis, which is the condensation of the polyisoprenoid side chain with PHB, generating the first membrane-bound Q intermediate 3-octaprenyl-4-hydroxybenzoate. The polypeptide is 4-hydroxybenzoate octaprenyltransferase (Coxiella burnetii (strain CbuG_Q212) (Coxiella burnetii (strain Q212))).